The following is a 111-amino-acid chain: Wound-induced proteinase inhibitor 1 (111 aa).

The first 23 residues, 1–23 (MESKFAHIIVFFLLATSFETLMA), serve as a signal peptide directing secretion. The propeptide occupies 24-36 (RKEIDGPEVIELL).

Belongs to the protease inhibitor I13 (potato type I serine protease inhibitor) family.

The protein localises to the secreted. The polypeptide is Wound-induced proteinase inhibitor 1 (PIIF) (Solanum lycopersicum (Tomato)).